The following is a 1412-amino-acid chain: DNA-directed RNA polymerase subunit beta' (1412 aa).

The Zn(2+) site is built by cysteine 70, cysteine 72, cysteine 85, and cysteine 88. Aspartate 458, aspartate 460, and aspartate 462 together coordinate Mg(2+). Positions 813, 887, 894, and 897 each coordinate Zn(2+). A disordered region spans residues 1388–1412; it reads EQALLTPATTAEAVVGEEPAPPPAQ. The span at 1393–1405 shows a compositional bias: low complexity; it reads TPATTAEAVVGEE.

It belongs to the RNA polymerase beta' chain family. In terms of assembly, the RNAP catalytic core consists of 2 alpha, 1 beta, 1 beta' and 1 omega subunit. When a sigma factor is associated with the core the holoenzyme is formed, which can initiate transcription. Mg(2+) is required as a cofactor. The cofactor is Zn(2+).

It carries out the reaction RNA(n) + a ribonucleoside 5'-triphosphate = RNA(n+1) + diphosphate. Functionally, DNA-dependent RNA polymerase catalyzes the transcription of DNA into RNA using the four ribonucleoside triphosphates as substrates. The sequence is that of DNA-directed RNA polymerase subunit beta' from Methylibium petroleiphilum (strain ATCC BAA-1232 / LMG 22953 / PM1).